A 377-amino-acid chain; its full sequence is 6-oxocyclohex-1-ene-1-carbonyl-CoA hydrolase (377 aa).

It belongs to the enoyl-CoA hydratase/isomerase family. In terms of assembly, homotetramer.

The enzyme catalyses 6-oxocyclohex-1-ene-1-carbonyl-CoA + 2 H2O = 3-hydroxy-6-carboxyhexanoyl-CoA + H(+). The protein operates within aromatic compound metabolism; benzoyl-CoA degradation. Functionally, involved in the central benzoyl-CoA catabolism. Catalyzes the addition of one molecule of water to the double bond and the hydrolytic cleavage of C-C bond in the alicyclic ring, 6-oxocyclohex-1-ene-1-carbonyl-CoA (6-OCH-CoA) to yield 3-hydroxypimelyl-CoA. In Thauera aromatica, this protein is 6-oxocyclohex-1-ene-1-carbonyl-CoA hydrolase (oah).